Reading from the N-terminus, the 239-residue chain is tRNA (guanine-N(1)-)-methyltransferase (239 aa).

S-adenosyl-L-methionine-binding positions include Gly-108 and 127–132 (LGDYVL).

This sequence belongs to the RNA methyltransferase TrmD family. Homodimer.

Its subcellular location is the cytoplasm. It catalyses the reaction guanosine(37) in tRNA + S-adenosyl-L-methionine = N(1)-methylguanosine(37) in tRNA + S-adenosyl-L-homocysteine + H(+). In terms of biological role, specifically methylates guanosine-37 in various tRNAs. The protein is tRNA (guanine-N(1)-)-methyltransferase of Streptococcus pneumoniae serotype 2 (strain D39 / NCTC 7466).